The following is a 162-amino-acid chain: UPF0114 protein Sden_0436 (162 aa).

Transmembrane regions (helical) follow at residues 15–35, 53–73, and 136–156; these read IMAP…IKFF, LVLI…LIMV, and IMWY…MGYL.

Belongs to the UPF0114 family.

It is found in the cell membrane. The protein is UPF0114 protein Sden_0436 of Shewanella denitrificans (strain OS217 / ATCC BAA-1090 / DSM 15013).